We begin with the raw amino-acid sequence, 142 residues long: Sec-independent protein translocase protein TatB (142 aa).

Residues 1-21 form a helical membrane-spanning segment; it reads MFDFGFSELVVIGVVMLIVVG. A disordered region spans residues 99–142; that stretch reads AAPPDNTTSAESQAAADPAAVDSSQQLELRLDTTPKQVVGSDKA. Low complexity predominate over residues 107 to 124; the sequence is SAESQAAADPAAVDSSQQ.

The protein belongs to the TatB family. As to quaternary structure, the Tat system comprises two distinct complexes: a TatABC complex, containing multiple copies of TatA, TatB and TatC subunits, and a separate TatA complex, containing only TatA subunits. Substrates initially bind to the TatABC complex, which probably triggers association of the separate TatA complex to form the active translocon.

It localises to the cell inner membrane. Part of the twin-arginine translocation (Tat) system that transports large folded proteins containing a characteristic twin-arginine motif in their signal peptide across membranes. Together with TatC, TatB is part of a receptor directly interacting with Tat signal peptides. TatB may form an oligomeric binding site that transiently accommodates folded Tat precursor proteins before their translocation. The polypeptide is Sec-independent protein translocase protein TatB (Azoarcus sp. (strain BH72)).